The chain runs to 516 residues: Alstonine synthase (516 aa).

The helical transmembrane segment at 6 to 26 (NFSLTSPIFLLLSSLFLIILL) threads the bilayer. Heme is bound at residue Cys453.

The protein belongs to the cytochrome P450 family. The cofactor is heme. Highly expressed in stems. Expressed at low levels in roots.

The protein resides in the endoplasmic reticulum membrane. It catalyses the reaction tetrahydroalstonine + A + reduced [NADPH--hemoprotein reductase] + O2 = alstonine + AH2 + oxidized [NADPH--hemoprotein reductase] + 2 H2O + H(+). The enzyme catalyses ajmalicine + A + reduced [NADPH--hemoprotein reductase] + O2 = serpentine + AH2 + oxidized [NADPH--hemoprotein reductase] + 2 H2O + H(+). It participates in alkaloid biosynthesis. Involved in monoterpene indole alkaloids (MIAs) biosynthesis. Converts by aromatization the tetrahydro-beta-carboline alkaloids tetrahydroalstonine and ajmalicine to the corresponding beta-carboline alkaloids alstonine and serpentine, respectively. This chain is Alstonine synthase, found in Catharanthus roseus (Madagascar periwinkle).